Reading from the N-terminus, the 127-residue chain is Aspartate 1-decarboxylase (127 aa).

Catalysis depends on Ser25, which acts as the Schiff-base intermediate with substrate; via pyruvic acid. Ser25 is modified (pyruvic acid (Ser)). Position 57 (Thr57) interacts with substrate. Tyr58 functions as the Proton donor in the catalytic mechanism. 73–75 lines the substrate pocket; that stretch reads GAA.

Belongs to the PanD family. As to quaternary structure, heterooctamer of four alpha and four beta subunits. The cofactor is pyruvate. In terms of processing, is synthesized initially as an inactive proenzyme, which is activated by self-cleavage at a specific serine bond to produce a beta-subunit with a hydroxyl group at its C-terminus and an alpha-subunit with a pyruvoyl group at its N-terminus.

It localises to the cytoplasm. It catalyses the reaction L-aspartate + H(+) = beta-alanine + CO2. Its pathway is cofactor biosynthesis; (R)-pantothenate biosynthesis; beta-alanine from L-aspartate: step 1/1. In terms of biological role, catalyzes the pyruvoyl-dependent decarboxylation of aspartate to produce beta-alanine. The protein is Aspartate 1-decarboxylase of Bacillus cytotoxicus (strain DSM 22905 / CIP 110041 / 391-98 / NVH 391-98).